A 537-amino-acid chain; its full sequence is Phosphoenolpyruvate carboxykinase (ATP) (537 aa).

Substrate contacts are provided by arginine 61, tyrosine 195, and lysine 201. ATP-binding positions include lysine 201, histidine 220, and 236-244 (GLSGTGKTT). Residues lysine 201 and histidine 220 each coordinate Mn(2+). Position 257 (aspartate 257) interacts with Mn(2+). ATP is bound by residues glutamate 285, arginine 323, and threonine 448. Arginine 323 serves as a coordination point for substrate.

This sequence belongs to the phosphoenolpyruvate carboxykinase (ATP) family. Mn(2+) is required as a cofactor.

It is found in the cytoplasm. The enzyme catalyses oxaloacetate + ATP = phosphoenolpyruvate + ADP + CO2. Its pathway is carbohydrate biosynthesis; gluconeogenesis. In terms of biological role, involved in the gluconeogenesis. Catalyzes the conversion of oxaloacetate (OAA) to phosphoenolpyruvate (PEP) through direct phosphoryl transfer between the nucleoside triphosphate and OAA. This chain is Phosphoenolpyruvate carboxykinase (ATP), found in Rhodopseudomonas palustris (strain TIE-1).